The following is a 288-amino-acid chain: Acetyl-coenzyme A carboxylase carboxyl transferase subunit beta (288 aa).

The CoA carboxyltransferase N-terminal domain occupies L34–Q288. Residues C38, C41, C56, and C59 each contribute to the Zn(2+) site. Residues C38–C59 form a C4-type zinc finger.

The protein belongs to the AccD/PCCB family. As to quaternary structure, acetyl-CoA carboxylase is a heterohexamer composed of biotin carboxyl carrier protein (AccB), biotin carboxylase (AccC) and two subunits each of ACCase subunit alpha (AccA) and ACCase subunit beta (AccD). Requires Zn(2+) as cofactor.

Its subcellular location is the cytoplasm. The enzyme catalyses N(6)-carboxybiotinyl-L-lysyl-[protein] + acetyl-CoA = N(6)-biotinyl-L-lysyl-[protein] + malonyl-CoA. It functions in the pathway lipid metabolism; malonyl-CoA biosynthesis; malonyl-CoA from acetyl-CoA: step 1/1. Component of the acetyl coenzyme A carboxylase (ACC) complex. Biotin carboxylase (BC) catalyzes the carboxylation of biotin on its carrier protein (BCCP) and then the CO(2) group is transferred by the transcarboxylase to acetyl-CoA to form malonyl-CoA. The polypeptide is Acetyl-coenzyme A carboxylase carboxyl transferase subunit beta (Streptococcus dysgalactiae subsp. equisimilis (strain GGS_124)).